A 211-amino-acid chain; its full sequence is Large ribosomal subunit protein uL3 (211 aa).

Belongs to the universal ribosomal protein uL3 family. As to quaternary structure, part of the 50S ribosomal subunit. Forms a cluster with proteins L14 and L19.

Its function is as follows. One of the primary rRNA binding proteins, it binds directly near the 3'-end of the 23S rRNA, where it nucleates assembly of the 50S subunit. This is Large ribosomal subunit protein uL3 from Geotalea daltonii (strain DSM 22248 / JCM 15807 / FRC-32) (Geobacter daltonii).